The sequence spans 549 residues: Oxygen-dependent choline dehydrogenase (549 aa).

4 to 33 serves as a coordination point for FAD; sequence DFVIIGSGSAGSAMAYRLSEDGRYSVIVIE. H465 serves as the catalytic Proton acceptor.

This sequence belongs to the GMC oxidoreductase family. FAD is required as a cofactor.

The enzyme catalyses choline + A = betaine aldehyde + AH2. It carries out the reaction betaine aldehyde + NAD(+) + H2O = glycine betaine + NADH + 2 H(+). The protein operates within amine and polyamine biosynthesis; betaine biosynthesis via choline pathway; betaine aldehyde from choline (cytochrome c reductase route): step 1/1. Its function is as follows. Involved in the biosynthesis of the osmoprotectant glycine betaine. Catalyzes the oxidation of choline to betaine aldehyde and betaine aldehyde to glycine betaine at the same rate. The polypeptide is Oxygen-dependent choline dehydrogenase (Brucella anthropi (strain ATCC 49188 / DSM 6882 / CCUG 24695 / JCM 21032 / LMG 3331 / NBRC 15819 / NCTC 12168 / Alc 37) (Ochrobactrum anthropi)).